The chain runs to 354 residues: Histidinol-phosphate aminotransferase (354 aa).

K208 is subject to N6-(pyridoxal phosphate)lysine.

It belongs to the class-II pyridoxal-phosphate-dependent aminotransferase family. Histidinol-phosphate aminotransferase subfamily. As to quaternary structure, homodimer. Requires pyridoxal 5'-phosphate as cofactor.

It carries out the reaction L-histidinol phosphate + 2-oxoglutarate = 3-(imidazol-4-yl)-2-oxopropyl phosphate + L-glutamate. It functions in the pathway amino-acid biosynthesis; L-histidine biosynthesis; L-histidine from 5-phospho-alpha-D-ribose 1-diphosphate: step 7/9. This is Histidinol-phosphate aminotransferase from Aquifex aeolicus (strain VF5).